We begin with the raw amino-acid sequence, 283 residues long: Putative UTP--glucose-1-phosphate uridylyltransferase (283 aa).

The protein belongs to the UDPGP type 2 family.

The catalysed reaction is alpha-D-glucose 1-phosphate + UTP + H(+) = UDP-alpha-D-glucose + diphosphate. This chain is Putative UTP--glucose-1-phosphate uridylyltransferase, found in Methanocaldococcus jannaschii (strain ATCC 43067 / DSM 2661 / JAL-1 / JCM 10045 / NBRC 100440) (Methanococcus jannaschii).